We begin with the raw amino-acid sequence, 534 residues long: MSDVSGRFVVAAAVVAVSLAMAAAAAAHDYGEALSKSLLYFEAQRSGRLPYNQRVRWRGHSGLTDGLEQGVDLVGGYYDAGDHVKFGLPMAFTVTMLSWSVLEYGEEIAAAGELGHALHAIKWGTDYFIKAHTHPNVLWTQVGDGDSDHYCWQRPEDMTTSRHAYKVDAENPGSEVAAETAAAMAAASIVFRRAGDAHYAHLLLHHAQQLFEFGDKYRGRYDESVEVVKNYYPSSSGYKDELLWAALWLHRATGRREYLDYAVDNADDFGGTGWAVSEFSWDIKYAGLQVLASKLLVEEKHLSSQQREVLEKYRSKAEYYVCSCMGRNPGGAAHNAGRTPAGLLFIRPWNNLQYVSNAAFLLTVYSDVLSYLSLPLLCPDPDAAADEAAPAAADAGEVLEFARSQADYILGTNPMATSYLVGYGEAYPRRVHHRAASSASYARDRDFIGCLQGFDSWYSAAAENPHDLVGAVVGGPNGNDVFTDHRGAYMQTEACTYNTAPMVGVFSRLMELERRRRGEDAPPSSTSPVAEDDL.

An N-terminal signal peptide occupies residues 1-27 (MSDVSGRFVVAAAVVAVSLAMAAAAAA). Asp82 acts as the Nucleophile in catalysis. Active-site residues include His432, Asp484, and Glu493. The segment at 515-534 (RRRGEDAPPSSTSPVAEDDL) is disordered.

This sequence belongs to the glycosyl hydrolase 9 (cellulase E) family.

It is found in the secreted. The enzyme catalyses Endohydrolysis of (1-&gt;4)-beta-D-glucosidic linkages in cellulose, lichenin and cereal beta-D-glucans.. In Oryza sativa subsp. japonica (Rice), this protein is Endoglucanase 5.